Reading from the N-terminus, the 404-residue chain is Multidrug resistance protein MdtG (404 aa).

The next 11 helical transmembrane spans lie at 19–39, 56–76, 90–110, 113–133, 144–164, 171–191, 222–242, 254–274, 288–308, 317–337, and 376–396; these read LGCF…PLYV, LVFS…GGLA, LGMA…QFLI, ALLG…ATQV, TLST…GLLA, PVFF…FFFI, LFVT…ILTL, IAFI…LSAP, ILIV…FVQT, FLLG…LVYN, and AVFC…WNSL.

It belongs to the major facilitator superfamily. DHA1 family. MdtG (TC 2.A.1.2.20) subfamily.

The protein resides in the cell inner membrane. This Salmonella agona (strain SL483) protein is Multidrug resistance protein MdtG.